The sequence spans 359 residues: MASLFDKNSFQMTRLQKTAVAKVVGVSLIMLLAACSSDQRYKRQVSGDEAYLDASGLHELKAPVGMILPVQNGTYEVQAGSMQGAVGKQLDIRPPSQPLALLSGSQTQFSGNSSTVLLENTAQNRDLWNNVVKAVEQNNFKIANRDDANQTLTTDFVDWNRADEDFQYQGRYQISVKQQSYQLALTVKTLELKQQDKPVTSSAEIQRYNSQMMNAITANLDKVQQDTQARLDNRRVGEIDVQSGADDTGLPVLIVRESYGVVWDRLPNALTKVGMKVTDSSRPQGTLSVTYKPLNDDAWQTLGAKDPGLTSGDYKLQVGDLDNRSSLQFLDPKGHALSQSQNDAMVAVMQAAFSQSNAK.

The N-terminal stretch at 1–34 is a signal peptide; sequence MASLFDKNSFQMTRLQKTAVAKVVGVSLIMLLAA. The N-palmitoyl cysteine moiety is linked to residue Cys35. Cys35 carries the S-diacylglycerol cysteine lipid modification.

Belongs to the BamC family. In terms of assembly, part of the Bam complex, which is composed of the outer membrane protein BamA, and four lipoproteins BamB, BamC, BamD and BamE.

Its subcellular location is the cell outer membrane. Functionally, part of the outer membrane protein assembly complex, which is involved in assembly and insertion of beta-barrel proteins into the outer membrane. This chain is Outer membrane protein assembly factor BamC, found in Rahnella sp. (strain Y9602).